Here is a 100-residue protein sequence, read N- to C-terminus: Small ribosomal subunit protein uS14c (100 aa).

It belongs to the universal ribosomal protein uS14 family. Part of the 30S ribosomal subunit.

Its subcellular location is the plastid. The protein resides in the chloroplast. Functionally, binds 16S rRNA, required for the assembly of 30S particles. The polypeptide is Small ribosomal subunit protein uS14c (Tupiella akineta (Green alga)).